The chain runs to 321 residues: tRNA U34 carboxymethyltransferase (321 aa).

Carboxy-S-adenosyl-L-methionine-binding positions include Lys90, Trp104, Lys109, Gly129, 151–153, 180–181, Met195, Tyr199, and Arg314; these read DPT and IE.

Belongs to the class I-like SAM-binding methyltransferase superfamily. CmoB family. As to quaternary structure, homotetramer.

The catalysed reaction is carboxy-S-adenosyl-L-methionine + 5-hydroxyuridine(34) in tRNA = 5-carboxymethoxyuridine(34) in tRNA + S-adenosyl-L-homocysteine + H(+). Functionally, catalyzes carboxymethyl transfer from carboxy-S-adenosyl-L-methionine (Cx-SAM) to 5-hydroxyuridine (ho5U) to form 5-carboxymethoxyuridine (cmo5U) at position 34 in tRNAs. The polypeptide is tRNA U34 carboxymethyltransferase (Haemophilus influenzae (strain 86-028NP)).